Here is a 141-residue protein sequence, read N- to C-terminus: Ribonuclease P protein component (141 aa).

It belongs to the RnpA family. In terms of assembly, consists of a catalytic RNA component (M1 or rnpB) and a protein subunit.

The catalysed reaction is Endonucleolytic cleavage of RNA, removing 5'-extranucleotides from tRNA precursor.. RNaseP catalyzes the removal of the 5'-leader sequence from pre-tRNA to produce the mature 5'-terminus. It can also cleave other RNA substrates such as 4.5S RNA. The protein component plays an auxiliary but essential role in vivo by binding to the 5'-leader sequence and broadening the substrate specificity of the ribozyme. The protein is Ribonuclease P protein component of Onion yellows phytoplasma (strain OY-M).